The primary structure comprises 91 residues: Large ribosomal subunit protein bL31B-1 (91 aa).

The protein belongs to the bacterial ribosomal protein bL31 family. Type B subfamily. As to quaternary structure, part of the 50S ribosomal subunit.

The polypeptide is Large ribosomal subunit protein bL31B-1 (Streptomyces avermitilis (strain ATCC 31267 / DSM 46492 / JCM 5070 / NBRC 14893 / NCIMB 12804 / NRRL 8165 / MA-4680)).